The primary structure comprises 475 residues: Adenosylhomocysteinase (475 aa).

3 residues coordinate substrate: Thr-61, Asp-140, and Glu-200. An NAD(+)-binding site is contributed by 201 to 203 (TTT). Substrate is bound by residues Lys-230 and Asp-234. NAD(+) contacts are provided by residues Asn-235, 264 to 269 (GYGDVG), Glu-287, Asn-322, 343 to 345 (IGH), and Asn-388.

The protein belongs to the adenosylhomocysteinase family. NAD(+) is required as a cofactor.

It localises to the cytoplasm. The enzyme catalyses S-adenosyl-L-homocysteine + H2O = L-homocysteine + adenosine. Its pathway is amino-acid biosynthesis; L-homocysteine biosynthesis; L-homocysteine from S-adenosyl-L-homocysteine: step 1/1. May play a key role in the regulation of the intracellular concentration of adenosylhomocysteine. The chain is Adenosylhomocysteinase from Paracidovorax citrulli (strain AAC00-1) (Acidovorax citrulli).